Consider the following 122-residue polypeptide: Large ribosomal subunit protein uL14 (122 aa).

Belongs to the universal ribosomal protein uL14 family. In terms of assembly, part of the 50S ribosomal subunit. Forms a cluster with proteins L3 and L19. In the 70S ribosome, L14 and L19 interact and together make contacts with the 16S rRNA in bridges B5 and B8.

Binds to 23S rRNA. Forms part of two intersubunit bridges in the 70S ribosome. In Solidesulfovibrio magneticus (strain ATCC 700980 / DSM 13731 / RS-1) (Desulfovibrio magneticus), this protein is Large ribosomal subunit protein uL14.